The chain runs to 207 residues: Thiamine-phosphate synthase (207 aa).

4-amino-2-methyl-5-(diphosphooxymethyl)pyrimidine contacts are provided by residues 36–40 (QLRMK) and Asn68. 2 residues coordinate Mg(2+): Asp69 and Asp88. Ser106 contributes to the 4-amino-2-methyl-5-(diphosphooxymethyl)pyrimidine binding site. 2-[(2R,5Z)-2-carboxy-4-methylthiazol-5(2H)-ylidene]ethyl phosphate is bound at residue 132-134 (TNT). Lys135 serves as a coordination point for 4-amino-2-methyl-5-(diphosphooxymethyl)pyrimidine. Residues Gly162 and 182–183 (VS) each bind 2-[(2R,5Z)-2-carboxy-4-methylthiazol-5(2H)-ylidene]ethyl phosphate.

Belongs to the thiamine-phosphate synthase family. It depends on Mg(2+) as a cofactor.

The catalysed reaction is 2-[(2R,5Z)-2-carboxy-4-methylthiazol-5(2H)-ylidene]ethyl phosphate + 4-amino-2-methyl-5-(diphosphooxymethyl)pyrimidine + 2 H(+) = thiamine phosphate + CO2 + diphosphate. It catalyses the reaction 2-(2-carboxy-4-methylthiazol-5-yl)ethyl phosphate + 4-amino-2-methyl-5-(diphosphooxymethyl)pyrimidine + 2 H(+) = thiamine phosphate + CO2 + diphosphate. It carries out the reaction 4-methyl-5-(2-phosphooxyethyl)-thiazole + 4-amino-2-methyl-5-(diphosphooxymethyl)pyrimidine + H(+) = thiamine phosphate + diphosphate. Its pathway is cofactor biosynthesis; thiamine diphosphate biosynthesis; thiamine phosphate from 4-amino-2-methyl-5-diphosphomethylpyrimidine and 4-methyl-5-(2-phosphoethyl)-thiazole: step 1/1. Functionally, condenses 4-methyl-5-(beta-hydroxyethyl)thiazole monophosphate (THZ-P) and 2-methyl-4-amino-5-hydroxymethyl pyrimidine pyrophosphate (HMP-PP) to form thiamine monophosphate (TMP). The protein is Thiamine-phosphate synthase of Methanococcus maripaludis (strain C7 / ATCC BAA-1331).